The sequence spans 67 residues: DNA-directed RNA polymerase subunit omega (67 aa).

It belongs to the RNA polymerase subunit omega family. As to quaternary structure, the RNAP catalytic core consists of 2 alpha, 1 beta, 1 beta' and 1 omega subunit. When a sigma factor is associated with the core the holoenzyme is formed, which can initiate transcription.

It catalyses the reaction RNA(n) + a ribonucleoside 5'-triphosphate = RNA(n+1) + diphosphate. Functionally, promotes RNA polymerase assembly. Latches the N- and C-terminal regions of the beta' subunit thereby facilitating its interaction with the beta and alpha subunits. The protein is DNA-directed RNA polymerase subunit omega of Dictyoglomus turgidum (strain DSM 6724 / Z-1310).